Here is a 249-residue protein sequence, read N- to C-terminus: Hydroxyacylglutathione hydrolase (249 aa).

Residues histidine 54, histidine 56, aspartate 58, histidine 59, histidine 113, aspartate 138, and histidine 176 each contribute to the Zn(2+) site.

This sequence belongs to the metallo-beta-lactamase superfamily. Glyoxalase II family. In terms of assembly, monomer. It depends on Zn(2+) as a cofactor.

The enzyme catalyses an S-(2-hydroxyacyl)glutathione + H2O = a 2-hydroxy carboxylate + glutathione + H(+). It functions in the pathway secondary metabolite metabolism; methylglyoxal degradation; (R)-lactate from methylglyoxal: step 2/2. Functionally, thiolesterase that catalyzes the hydrolysis of S-D-lactoyl-glutathione to form glutathione and D-lactic acid. This is Hydroxyacylglutathione hydrolase from Parasynechococcus marenigrum (strain WH8102).